The following is a 202-amino-acid chain: Putative zinc finger protein ZK686.5 (202 aa).

Residues 43-63 (RKNVDNTSTRKPYSYKDRKRK) are disordered. 3 C2H2-type zinc fingers span residues 110–133 (TYCE…GKVH), 138–160 (IECH…MKTH), and 169–192 (VQCE…DVSH).

Its subcellular location is the nucleus. In Caenorhabditis elegans, this protein is Putative zinc finger protein ZK686.5.